Reading from the N-terminus, the 88-residue chain is Small ribosomal subunit protein uS17 (88 aa).

Belongs to the universal ribosomal protein uS17 family. As to quaternary structure, part of the 30S ribosomal subunit.

Its function is as follows. One of the primary rRNA binding proteins, it binds specifically to the 5'-end of 16S ribosomal RNA. This is Small ribosomal subunit protein uS17 from Pseudomonas putida (strain ATCC 700007 / DSM 6899 / JCM 31910 / BCRC 17059 / LMG 24140 / F1).